The primary structure comprises 82 residues: Sulfur carrier protein TusA (82 aa).

Cys-19 functions as the Cysteine persulfide intermediate in the catalytic mechanism.

The protein belongs to the sulfur carrier protein TusA family. As to quaternary structure, interacts with IscS.

The protein resides in the cytoplasm. It participates in tRNA modification. Sulfur carrier protein involved in sulfur trafficking in the cell. Part of a sulfur-relay system required for 2-thiolation during synthesis of 2-thiouridine of the modified wobble base 5-methylaminomethyl-2-thiouridine (mnm(5)s(2)U) in tRNA. Interacts with IscS and stimulates its cysteine desulfurase activity. Accepts an activated sulfur from IscS, which is then transferred to TusD, and thus determines the direction of sulfur flow from IscS to 2-thiouridine formation. Also appears to be involved in sulfur transfer for the biosynthesis of molybdopterin. The sequence is that of Sulfur carrier protein TusA from Edwardsiella ictaluri (strain 93-146).